Reading from the N-terminus, the 381-residue chain is Queuine tRNA-ribosyltransferase (381 aa).

Aspartate 103 acts as the Proton acceptor in catalysis. Substrate is bound by residues 103 to 107 (DSGGF), aspartate 157, glutamine 200, and glycine 227. The segment at 258–264 (GVGTYRE) is RNA binding. Residue aspartate 277 is the Nucleophile of the active site. An RNA binding; important for wobble base 34 recognition region spans residues 282–286 (TRLAR). Zn(2+) is bound by residues cysteine 315, cysteine 317, cysteine 320, and histidine 346.

It belongs to the queuine tRNA-ribosyltransferase family. In terms of assembly, homodimer. Within each dimer, one monomer is responsible for RNA recognition and catalysis, while the other monomer binds to the replacement base PreQ1. Zn(2+) serves as cofactor.

It catalyses the reaction 7-aminomethyl-7-carbaguanine + guanosine(34) in tRNA = 7-aminomethyl-7-carbaguanosine(34) in tRNA + guanine. It functions in the pathway tRNA modification; tRNA-queuosine biosynthesis. Its function is as follows. Catalyzes the base-exchange of a guanine (G) residue with the queuine precursor 7-aminomethyl-7-deazaguanine (PreQ1) at position 34 (anticodon wobble position) in tRNAs with GU(N) anticodons (tRNA-Asp, -Asn, -His and -Tyr). Catalysis occurs through a double-displacement mechanism. The nucleophile active site attacks the C1' of nucleotide 34 to detach the guanine base from the RNA, forming a covalent enzyme-RNA intermediate. The proton acceptor active site deprotonates the incoming PreQ1, allowing a nucleophilic attack on the C1' of the ribose to form the product. After dissociation, two additional enzymatic reactions on the tRNA convert PreQ1 to queuine (Q), resulting in the hypermodified nucleoside queuosine (7-(((4,5-cis-dihydroxy-2-cyclopenten-1-yl)amino)methyl)-7-deazaguanosine). This chain is Queuine tRNA-ribosyltransferase, found in Cyanothece sp. (strain PCC 7425 / ATCC 29141).